A 337-amino-acid chain; its full sequence is Palmitoyltransferase ZDHHC15 (337 aa).

The Cytoplasmic segment spans residues 1-20; that stretch reads MRRGWKMALSGGLRCCRRVL. The chain crosses the membrane as a helical span at residues 21–41; that stretch reads SWVPVLVIVLVVLWSYYAYVF. At 42–56 the chain is on the lumenal side; sequence ELCLVTVLSPAEKVI. The helical transmembrane segment at 57-77 threads the bilayer; sequence YLILYHAIFVFFAWTYWKSIF. The Cytoplasmic portion of the chain corresponds to 78 to 172; the sequence is TLPQQPNQKF…NNCIGFSNYK (95 aa). Positions 129–179 constitute a DHHC domain; that stretch reads RFCDRCHLIKPDRCHHCSVCAMCVLKMDHHCPWVNNCIGFSNYKFFLQFLA. Residues Cys-131, Cys-134, His-144, Cys-145, Cys-148, Cys-151, and His-158 each coordinate Zn(2+). Cys-159 acts as the S-palmitoyl cysteine intermediate in catalysis. Cys-165 is a Zn(2+) binding site. A helical membrane pass occupies residues 173 to 193; it reads FFLQFLAYSVLYCLYIATTVF. The Lumenal portion of the chain corresponds to 194–210; the sequence is SYFIKYWRGELPSVRSK. The chain crosses the membrane as a helical span at residues 211-234; the sequence is FHVLFLLFVACMFFVSLVILFGYH. The Cytoplasmic portion of the chain corresponds to 235 to 337; sequence CWLVSRNKTT…SSSLAVESET (103 aa). The interval 293–337 is disordered; it reads HSFPMRSMNESQNPLLANEEPWEDNEDDSRDYPEGSSSLAVESET. Residues 312–321 are compositionally biased toward acidic residues; sequence EPWEDNEDDS. The segment covering 327–337 has biased composition (polar residues); the sequence is GSSSLAVESET.

Belongs to the DHHC palmitoyltransferase family. Autopalmitoylated (in vitro). Expressed mainly in brain.

Its subcellular location is the golgi apparatus membrane. It localises to the postsynaptic density. The catalysed reaction is L-cysteinyl-[protein] + hexadecanoyl-CoA = S-hexadecanoyl-L-cysteinyl-[protein] + CoA. It catalyses the reaction L-cysteinyl-[protein] + tetradecanoyl-CoA = S-tetradecanoyl-L-cysteinyl-[protein] + CoA. It carries out the reaction L-cysteinyl-[protein] + octadecanoyl-CoA = S-octadecanoyl-L-cysteinyl-[protein] + CoA. Inhibited by 2-bromopalmitate. In terms of biological role, palmitoyltransferase that catalyzes the addition of palmitate onto various protein substrates. Has no stringent fatty acid selectivity and in addition to palmitate can also transfer onto target proteins myristate from tetradecanoyl-CoA and stearate from octadecanoyl-CoA. Palmitoylates IGF2R and SORT1, promoting their partitioning to an endosomal membrane subdomain where they can interact with the retromer cargo-selective complex. Thereby, regulates retrograde transport from endosomes to the Golgi apparatus of these lysosomal sorting receptors and plays a role in trafficking of lysosomal proteins. In the nervous system, catalyzes the palmitoylation of DLG4/PSD95 and regulates its synaptic clustering and function in synaptogenesis. Could be involved in the differentiation of dopaminergic neurons and the development of the diencephalon. Could also catalyze the palmitoylation of GAP43. Could also palmitoylate DNAJC5 and regulate its localization to the Golgi membrane. Could also palmitoylate FYN as shown in vitro. May palmitoylate CALHM3 subunit of gustatory voltage-gated ion channels and modulate channel gating and kinetics. The sequence is that of Palmitoyltransferase ZDHHC15 from Mus musculus (Mouse).